Consider the following 113-residue polypeptide: MSQEIYDYANQLERAVRALPEYQKVLEVKEAIQADASASELFDEFVAMQEKIQEMMQSGQMPTAEEQTSIQELSQKIEANDQLKAYFEAQQALSVYMSDIERIVFAPLKDLVK.

This sequence belongs to the UPF0342 family.

The protein is UPF0342 protein MGAS10750_Spy0713 of Streptococcus pyogenes serotype M4 (strain MGAS10750).